The following is a 396-amino-acid chain: Elongation factor Tu (396 aa).

The 196-residue stretch at 10 to 205 (KPHVNIGTIG…ACDDSIPDPE (196 aa)) folds into the tr-type G domain. The G1 stretch occupies residues 19–26 (GHVDHGKT). 19 to 26 (GHVDHGKT) is a GTP binding site. Thr26 is a binding site for Mg(2+). The interval 62–66 (GITIN) is G2. The interval 83–86 (DAPG) is G3. GTP is bound by residues 83 to 87 (DAPGH) and 138 to 141 (NKCD). Residues 138-141 (NKCD) are G4. Positions 175-177 (SAL) are G5.

The protein belongs to the TRAFAC class translation factor GTPase superfamily. Classic translation factor GTPase family. EF-Tu/EF-1A subfamily. Monomer.

The protein localises to the cytoplasm. It catalyses the reaction GTP + H2O = GDP + phosphate + H(+). Functionally, GTP hydrolase that promotes the GTP-dependent binding of aminoacyl-tRNA to the A-site of ribosomes during protein biosynthesis. The chain is Elongation factor Tu from Corynebacterium aurimucosum (strain ATCC 700975 / DSM 44827 / CIP 107346 / CN-1) (Corynebacterium nigricans).